A 308-amino-acid chain; its full sequence is Ribosomal RNA small subunit methyltransferase H (308 aa).

S-adenosyl-L-methionine-binding positions include 34-36, Asp54, Phe80, Asp101, and Gln108; that span reads GGH.

It belongs to the methyltransferase superfamily. RsmH family.

It localises to the cytoplasm. It catalyses the reaction cytidine(1402) in 16S rRNA + S-adenosyl-L-methionine = N(4)-methylcytidine(1402) in 16S rRNA + S-adenosyl-L-homocysteine + H(+). Specifically methylates the N4 position of cytidine in position 1402 (C1402) of 16S rRNA. This chain is Ribosomal RNA small subunit methyltransferase H, found in Ureaplasma parvum serovar 3 (strain ATCC 27815 / 27 / NCTC 11736).